We begin with the raw amino-acid sequence, 334 residues long: Inositol 2-dehydrogenase (334 aa).

It belongs to the Gfo/Idh/MocA family. As to quaternary structure, homotetramer.

It catalyses the reaction myo-inositol + NAD(+) = scyllo-inosose + NADH + H(+). Its function is as follows. Involved in the oxidation of myo-inositol (MI) to 2-keto-myo-inositol (2KMI or 2-inosose). This is Inositol 2-dehydrogenase from Cereibacter sphaeroides (strain ATCC 17023 / DSM 158 / JCM 6121 / CCUG 31486 / LMG 2827 / NBRC 12203 / NCIMB 8253 / ATH 2.4.1.) (Rhodobacter sphaeroides).